The following is a 679-amino-acid chain: Methionine--tRNA ligase (679 aa).

A 'HIGH' region motif is present at residues 12–22 (PYANGAIHLGH). Zn(2+) is bound by residues Cys143, Cys146, Cys156, and Cys159. The short motif at 328-332 (KMSKS) is the 'KMSKS' region element. Position 331 (Lys331) interacts with ATP. The 103-residue stretch at 577–679 (DFAKLDLRVA…EGIRPGMQVK (103 aa)) folds into the tRNA-binding domain.

The protein belongs to the class-I aminoacyl-tRNA synthetase family. MetG type 1 subfamily. In terms of assembly, homodimer. The cofactor is Zn(2+).

The protein resides in the cytoplasm. It carries out the reaction tRNA(Met) + L-methionine + ATP = L-methionyl-tRNA(Met) + AMP + diphosphate. In terms of biological role, is required not only for elongation of protein synthesis but also for the initiation of all mRNA translation through initiator tRNA(fMet) aminoacylation. This chain is Methionine--tRNA ligase, found in Actinobacillus pleuropneumoniae serotype 5b (strain L20).